The sequence spans 102 residues: Large ribosomal subunit protein uL24 (102 aa).

The protein belongs to the universal ribosomal protein uL24 family. As to quaternary structure, part of the 50S ribosomal subunit.

In terms of biological role, one of two assembly initiator proteins, it binds directly to the 5'-end of the 23S rRNA, where it nucleates assembly of the 50S subunit. One of the proteins that surrounds the polypeptide exit tunnel on the outside of the subunit. In Cupriavidus pinatubonensis (strain JMP 134 / LMG 1197) (Cupriavidus necator (strain JMP 134)), this protein is Large ribosomal subunit protein uL24.